A 194-amino-acid polypeptide reads, in one-letter code: Large ribosomal subunit protein uL24c (194 aa).

The transit peptide at 1-50 (MVAMAMASLQSSMSSLSLSSNSFLGQPLSPITLSPFLQGKPTEKKCLIVM) directs the protein to the chloroplast.

This sequence belongs to the universal ribosomal protein uL24 family. In terms of assembly, part of the 50S ribosomal subunit.

The protein localises to the plastid. It is found in the chloroplast. In terms of biological role, one of two assembly initiator proteins, it binds directly to the 5'-end of the 23S rRNA, where it nucleates assembly of the 50S subunit. In Pisum sativum (Garden pea), this protein is Large ribosomal subunit protein uL24c (RPL24).